Here is a 766-residue protein sequence, read N- to C-terminus: 5-methyltetrahydropteroyltriglutamate--homocysteine methyltransferase (766 aa).

5-methyltetrahydropteroyltri-L-glutamate contacts are provided by residues 16–19 and lysine 119; that span reads RELK. L-homocysteine contacts are provided by residues 440 to 442 and glutamate 493; that span reads IGS. Residues 440 to 442 and glutamate 493 each bind L-methionine; that span reads IGS. 5-methyltetrahydropteroyltri-L-glutamate contacts are provided by residues 524 to 525 and tryptophan 570; that span reads RC. Aspartate 608 contributes to the L-homocysteine binding site. An L-methionine-binding site is contributed by aspartate 608. Glutamate 614 serves as a coordination point for 5-methyltetrahydropteroyltri-L-glutamate. Zn(2+)-binding residues include histidine 650, cysteine 652, and glutamate 674. The active-site Proton donor is the histidine 703. Cysteine 735 contacts Zn(2+).

Belongs to the vitamin-B12 independent methionine synthase family. Requires Zn(2+) as cofactor.

The enzyme catalyses 5-methyltetrahydropteroyltri-L-glutamate + L-homocysteine = tetrahydropteroyltri-L-glutamate + L-methionine. Its pathway is amino-acid biosynthesis; L-methionine biosynthesis via de novo pathway; L-methionine from L-homocysteine (MetE route): step 1/1. In terms of biological role, catalyzes the transfer of a methyl group from 5-methyltetrahydrofolate to homocysteine resulting in methionine formation. This chain is 5-methyltetrahydropteroyltriglutamate--homocysteine methyltransferase, found in Pseudomonas aeruginosa (strain ATCC 15692 / DSM 22644 / CIP 104116 / JCM 14847 / LMG 12228 / 1C / PRS 101 / PAO1).